The primary structure comprises 481 residues: tRNA-2-methylthio-N(6)-dimethylallyladenosine synthase (481 aa).

Residues 24–140 (RKLFIESYGC…LPNLINEVEE (117 aa)) enclose the MTTase N-terminal domain. Residues C33, C69, C103, C178, C182, and C185 each coordinate [4Fe-4S] cluster. Residues 164 to 410 (QSNGVSAFVS…VDLQQKHSKQ (247 aa)) enclose the Radical SAM core domain. A TRAM domain is found at 413 to 476 (NSVIGTTVEV…SATLIGEPIG (64 aa)).

It belongs to the methylthiotransferase family. MiaB subfamily. In terms of assembly, monomer. [4Fe-4S] cluster is required as a cofactor.

It is found in the cytoplasm. The catalysed reaction is N(6)-dimethylallyladenosine(37) in tRNA + (sulfur carrier)-SH + AH2 + 2 S-adenosyl-L-methionine = 2-methylsulfanyl-N(6)-dimethylallyladenosine(37) in tRNA + (sulfur carrier)-H + 5'-deoxyadenosine + L-methionine + A + S-adenosyl-L-homocysteine + 2 H(+). Its function is as follows. Catalyzes the methylthiolation of N6-(dimethylallyl)adenosine (i(6)A), leading to the formation of 2-methylthio-N6-(dimethylallyl)adenosine (ms(2)i(6)A) at position 37 in tRNAs that read codons beginning with uridine. The polypeptide is tRNA-2-methylthio-N(6)-dimethylallyladenosine synthase (Christiangramia forsetii (strain DSM 17595 / CGMCC 1.15422 / KT0803) (Gramella forsetii)).